The following is a 338-amino-acid chain: Ketol-acid reductoisomerase (NADP(+)) (338 aa).

The KARI N-terminal Rossmann domain maps to Met-1–Thr-181. Residues Tyr-24 to Gln-27, Arg-47, and Ser-52 contribute to the NADP(+) site. The active site involves His-107. An NADP(+)-binding site is contributed by Gly-133. Residues Asn-182 to Ile-327 form the KARI C-terminal knotted domain. The Mg(2+) site is built by Asp-190, Glu-194, Glu-226, and Glu-230. Ser-251 is a substrate binding site.

The protein belongs to the ketol-acid reductoisomerase family. Mg(2+) is required as a cofactor.

It catalyses the reaction (2R)-2,3-dihydroxy-3-methylbutanoate + NADP(+) = (2S)-2-acetolactate + NADPH + H(+). The enzyme catalyses (2R,3R)-2,3-dihydroxy-3-methylpentanoate + NADP(+) = (S)-2-ethyl-2-hydroxy-3-oxobutanoate + NADPH + H(+). The protein operates within amino-acid biosynthesis; L-isoleucine biosynthesis; L-isoleucine from 2-oxobutanoate: step 2/4. It functions in the pathway amino-acid biosynthesis; L-valine biosynthesis; L-valine from pyruvate: step 2/4. Functionally, involved in the biosynthesis of branched-chain amino acids (BCAA). Catalyzes an alkyl-migration followed by a ketol-acid reduction of (S)-2-acetolactate (S2AL) to yield (R)-2,3-dihydroxy-isovalerate. In the isomerase reaction, S2AL is rearranged via a Mg-dependent methyl migration to produce 3-hydroxy-3-methyl-2-ketobutyrate (HMKB). In the reductase reaction, this 2-ketoacid undergoes a metal-dependent reduction by NADPH to yield (R)-2,3-dihydroxy-isovalerate. The chain is Ketol-acid reductoisomerase (NADP(+)) from Cupriavidus metallidurans (strain ATCC 43123 / DSM 2839 / NBRC 102507 / CH34) (Ralstonia metallidurans).